The following is a 425-amino-acid chain: Nuclear pore complex-interacting protein family member B6 (425 aa).

The interval 332-414 (SPLPPSVDDN…RRLSKLRTRH (83 aa)) is disordered. The span at 353–395 (EVEKPPKPKRWRVDEVEQSPKPKRRRVDEVEQSPKPKRQREAE) shows a compositional bias: basic and acidic residues. The span at 401-414 (KPKRRRLSKLRTRH) shows a compositional bias: basic residues.

Belongs to the NPIP family.

The chain is Nuclear pore complex-interacting protein family member B6 (NPIPB6) from Homo sapiens (Human).